The chain runs to 398 residues: Chalcone synthase 1 (398 aa).

58–65 is a binding site for CoA; the sequence is KFKRMCDK. The Acyl-thioester intermediate role is filled by cysteine 167. Substrate contacts are provided by residues threonine 200 and 219–220; that span reads GD. Alanine 311 provides a ligand contact to CoA.

It belongs to the thiolase-like superfamily. Chalcone/stilbene synthases family. Homodimer.

It carries out the reaction (E)-4-coumaroyl-CoA + 3 malonyl-CoA + 3 H(+) = 2',4,4',6'-tetrahydroxychalcone + 3 CO2 + 4 CoA. Its pathway is secondary metabolite biosynthesis; flavonoid biosynthesis. The primary product of this enzyme is 4,2',4',6'-tetrahydroxychalcone (also termed naringenin-chalcone or chalcone) which can under specific conditions spontaneously isomerize into naringenin. This Oryza sativa subsp. japonica (Rice) protein is Chalcone synthase 1 (CHS1).